Here is a 121-residue protein sequence, read N- to C-terminus: Large ribosomal subunit protein uL18 (121 aa).

The protein belongs to the universal ribosomal protein uL18 family. As to quaternary structure, part of the 50S ribosomal subunit; part of the 5S rRNA/L5/L18/L25 subcomplex. Contacts the 5S and 23S rRNAs.

Functionally, this is one of the proteins that bind and probably mediate the attachment of the 5S RNA into the large ribosomal subunit, where it forms part of the central protuberance. This is Large ribosomal subunit protein uL18 from Albidiferax ferrireducens (strain ATCC BAA-621 / DSM 15236 / T118) (Rhodoferax ferrireducens).